An 883-amino-acid chain; its full sequence is Phosphoenolpyruvate carboxylase (883 aa).

Catalysis depends on residues His-138 and Lys-546.

This sequence belongs to the PEPCase type 1 family. Requires Mg(2+) as cofactor.

The catalysed reaction is oxaloacetate + phosphate = phosphoenolpyruvate + hydrogencarbonate. In terms of biological role, forms oxaloacetate, a four-carbon dicarboxylic acid source for the tricarboxylic acid cycle. This is Phosphoenolpyruvate carboxylase from Salmonella paratyphi A (strain ATCC 9150 / SARB42).